Consider the following 423-residue polypeptide: Mannan endo-1,4-beta-mannosidase (423 aa).

Positions 1–27 (MKTITTARLPWAAQSFALGICLIALLG) are cleaved as a signal peptide. Residues 56–409 (METRSLFAFM…YADEFTAFNR (354 aa)) enclose the GH26 domain. Substrate-binding residues include Glu-121, His-143, and Trp-162. Glu-212 functions as the Proton donor in the catalytic mechanism. 2 residues coordinate substrate: Trp-217 and Tyr-285. The active-site Nucleophile is the Glu-320. Substrate contacts are provided by residues 360–361 (WR) and His-377.

Belongs to the glycosyl hydrolase 26 family. Homodimer.

It catalyses the reaction Random hydrolysis of (1-&gt;4)-beta-D-mannosidic linkages in mannans, galactomannans and glucomannans.. Its function is as follows. Catalyzes the endo hydrolysis of beta-1,4-linked mannan and galactomannan, but displays little activity towards other polysaccharides located in the plant cell wall. Preferentially hydrolyzes the larger oligosaccharides and has greater activity against non-substituted polysaccharides. It displays tight specificity for mannose at both the -2 and the -1 subsites. Appears to act in synergy with alpha-galactosidase (AgaA) to elicit hydrolysis of galactomannan. This Cellvibrio japonicus (strain Ueda107) (Pseudomonas fluorescens subsp. cellulosa) protein is Mannan endo-1,4-beta-mannosidase.